Consider the following 287-residue polypeptide: 2-dehydro-3-deoxyphosphooctonate aldolase (287 aa).

This sequence belongs to the KdsA family.

It is found in the cytoplasm. The enzyme catalyses D-arabinose 5-phosphate + phosphoenolpyruvate + H2O = 3-deoxy-alpha-D-manno-2-octulosonate-8-phosphate + phosphate. It participates in carbohydrate biosynthesis; 3-deoxy-D-manno-octulosonate biosynthesis; 3-deoxy-D-manno-octulosonate from D-ribulose 5-phosphate: step 2/3. It functions in the pathway bacterial outer membrane biogenesis; lipopolysaccharide biosynthesis. The polypeptide is 2-dehydro-3-deoxyphosphooctonate aldolase (Rhodopseudomonas palustris (strain ATCC BAA-98 / CGA009)).